The primary structure comprises 465 residues: Soluble pyridine nucleotide transhydrogenase (465 aa).

36–45 provides a ligand contact to FAD; the sequence is ERYNNVGGGC.

The protein belongs to the class-I pyridine nucleotide-disulfide oxidoreductase family. It depends on FAD as a cofactor.

It localises to the cytoplasm. The catalysed reaction is NAD(+) + NADPH = NADH + NADP(+). Functionally, conversion of NADPH, generated by peripheral catabolic pathways, to NADH, which can enter the respiratory chain for energy generation. The protein is Soluble pyridine nucleotide transhydrogenase of Serratia proteamaculans (strain 568).